The primary structure comprises 477 residues: (R)-2-hydroxyglutaryl-CoA dehydratase, subunit alpha (477 aa).

Belongs to the FldB/FldC dehydratase alpha/beta subunit family. In terms of assembly, the (R)-2-hydroxyglutaryl-CoA dehydratase enzyme system is a heterodimer composed of an alpha subunit (HgdA) and a beta subunit (HgdB). Requires [4Fe-4S] cluster as cofactor. The cofactor is FMN. Mg(2+) serves as cofactor.

The protein localises to the cytoplasm. The enzyme catalyses (R)-2-hydroxyglutaryl-CoA = (2E)-glutaconyl-CoA + H2O. Its pathway is amino-acid degradation; L-glutamate degradation via hydroxyglutarate pathway; crotonoyl-CoA from L-glutamate: step 4/5. Its activity is regulated as follows. Activated by the HgdC. Reversibly inactivated by oxidants such as 2-nitrophenol, 3-nitrophenol, 4-nitrophenol, 4-nitrobenzoate, carbonyl cyanide 4-(trifluoromethoxy)phenylhydrazone (FCCP) and chloramphenicol. Irreversibly inactivated by oxidants such as hydroxylamine and nitrite. Involved in the fermentation of L-glutamate via the hydroxyglutarate pathway. Catalyzes the reversible syn-elimination of water from (R)-2-hydroxyglutaryl-CoA to yield (E)-glutaconyl-CoA. The dehydration mechanism involves a transient one electron reduction of the thioester from (R)-2-hydroxyglutaryl-CoA, generating a ketyl radical. Prior to (E)-glutaconyl-CoA formation, the ketyl radical is subsequently reoxidized by electron transfer back to the HgdA-HgdB complex (CompD) to avoid change in oxidation state of the substrate. The appropriate redox state of dehydratase HgdA-HgdB complex (CompD) is maintained by HgdC (CompA) via hydrolysis of ATP and ATP-dependent electron transfer. Since the electron is recycled, the dehydratase is able to perform several turnovers with only catalytic amounts of ATP and substoichiometric amounts of HgdC (CompA). The chain is (R)-2-hydroxyglutaryl-CoA dehydratase, subunit alpha from Acidaminococcus fermentans (strain ATCC 25085 / DSM 20731 / CCUG 9996 / CIP 106432 / VR4).